Reading from the N-terminus, the 61-residue chain is Metallothionein-1A (61 aa).

Met1 carries the N-acetylmethionine modification. The tract at residues 1-29 is beta; that stretch reads MDPNCSCPTGGSCSCAGSCTCKACRCTSC. Residues Cys5, Cys7, Cys13, Cys15, Cys19, Cys21, Cys24, Cys26, Cys29, Cys33, Cys34, Cys36, Cys37, Cys41, Cys44, Cys48, Cys50, and Cys57 each contribute to the a divalent metal cation site. The alpha stretch occupies residues 30 to 61; it reads KKSCCSCCPAGCARCAQGCICKGASDKCSCCA. The residue at position 58 (Ser58) is a Phosphoserine. Residues Cys59 and Cys60 each coordinate a divalent metal cation.

It belongs to the metallothionein superfamily. Type 1 family. As to quaternary structure, monomer.

Metallothioneins have a high content of cysteine residues that bind various heavy metals; these proteins are transcriptionally regulated by both heavy metals and glucocorticoids. The protein is Metallothionein-1A (MT1A) of Sus scrofa (Pig).